A 231-amino-acid chain; its full sequence is Large ribosomal subunit protein uL1 (231 aa).

This sequence belongs to the universal ribosomal protein uL1 family. In terms of assembly, part of the 50S ribosomal subunit.

Binds directly to 23S rRNA. The L1 stalk is quite mobile in the ribosome, and is involved in E site tRNA release. In terms of biological role, protein L1 is also a translational repressor protein, it controls the translation of the L11 operon by binding to its mRNA. This is Large ribosomal subunit protein uL1 from Halorhodospira halophila (strain DSM 244 / SL1) (Ectothiorhodospira halophila (strain DSM 244 / SL1)).